Consider the following 340-residue polypeptide: Adenosine deaminase (340 aa).

Zn(2+) is bound by residues histidine 15 and histidine 17. Positions 17, 19, and 172 each coordinate substrate. Residue histidine 199 coordinates Zn(2+). Glutamate 202 functions as the Proton donor in the catalytic mechanism. Position 279 (aspartate 279) interacts with Zn(2+).

The protein belongs to the metallo-dependent hydrolases superfamily. Adenosine and AMP deaminases family. Adenosine deaminase subfamily. The cofactor is Zn(2+).

The enzyme catalyses adenosine + H2O + H(+) = inosine + NH4(+). The catalysed reaction is 2'-deoxyadenosine + H2O + H(+) = 2'-deoxyinosine + NH4(+). Its function is as follows. Catalyzes the hydrolytic deamination of adenosine and 2-deoxyadenosine. This chain is Adenosine deaminase, found in Streptococcus agalactiae serotype Ia (strain ATCC 27591 / A909 / CDC SS700).